A 239-amino-acid polypeptide reads, in one-letter code: Ribosomal RNA small subunit methyltransferase G (239 aa).

Residues G78, F83, 129–130, and R148 contribute to the S-adenosyl-L-methionine site; that span reads AE.

It belongs to the methyltransferase superfamily. RNA methyltransferase RsmG family.

It is found in the cytoplasm. Specifically methylates the N7 position of a guanine in 16S rRNA. The sequence is that of Ribosomal RNA small subunit methyltransferase G from Clostridium perfringens (strain SM101 / Type A).